The following is a 428-amino-acid chain: Histidine--tRNA ligase (428 aa).

Belongs to the class-II aminoacyl-tRNA synthetase family. Homodimer.

It localises to the cytoplasm. The enzyme catalyses tRNA(His) + L-histidine + ATP = L-histidyl-tRNA(His) + AMP + diphosphate + H(+). This chain is Histidine--tRNA ligase, found in Lactobacillus delbrueckii subsp. bulgaricus (strain ATCC BAA-365 / Lb-18).